Consider the following 323-residue polypeptide: MTAVTPDGRKLLRIEARNAQVPIERKPAWIRTRARMGPQYHALKELVRREGLHTVCEEAGCPNIFECWEDREATFLIGGDTCSRNCSFCQISSGRPQPLDRDEPRRVAESVARMGLRYATVTGVTRDDLDDEGAWLYAQTVREIHHAVPGCGVELLTPDFHGRPELLDEVFSARPEVFAHNIETVPRIFKSIRPGFRYERSLDVLRAAHDAGLVTKSNLILGLGETRQEIRAALADLRSAGCDLVTITQYLRPSIRHHPVVRWVEPAEFEELAAEARELGFAGVMSGPLVRSSYRAGRLYRAAIASRTDRRTDGATTQAPQTP.

Cysteine 56, cysteine 61, cysteine 67, cysteine 82, cysteine 86, cysteine 89, and serine 293 together coordinate [4Fe-4S] cluster. Residues 68-282 enclose the Radical SAM core domain; it reads WEDREATFLI…AAEARELGFA (215 aa).

Belongs to the radical SAM superfamily. Lipoyl synthase family. [4Fe-4S] cluster serves as cofactor.

It localises to the cytoplasm. It catalyses the reaction [[Fe-S] cluster scaffold protein carrying a second [4Fe-4S](2+) cluster] + N(6)-octanoyl-L-lysyl-[protein] + 2 oxidized [2Fe-2S]-[ferredoxin] + 2 S-adenosyl-L-methionine + 4 H(+) = [[Fe-S] cluster scaffold protein] + N(6)-[(R)-dihydrolipoyl]-L-lysyl-[protein] + 4 Fe(3+) + 2 hydrogen sulfide + 2 5'-deoxyadenosine + 2 L-methionine + 2 reduced [2Fe-2S]-[ferredoxin]. The protein operates within protein modification; protein lipoylation via endogenous pathway; protein N(6)-(lipoyl)lysine from octanoyl-[acyl-carrier-protein]: step 2/2. Its function is as follows. Catalyzes the radical-mediated insertion of two sulfur atoms into the C-6 and C-8 positions of the octanoyl moiety bound to the lipoyl domains of lipoate-dependent enzymes, thereby converting the octanoylated domains into lipoylated derivatives. This Acidothermus cellulolyticus (strain ATCC 43068 / DSM 8971 / 11B) protein is Lipoyl synthase.